We begin with the raw amino-acid sequence, 152 residues long: MACCSTSFCGFPICSTAGTCGSSCCRSTCSQTSCCQPTSIQTSCCQPTCLQTSGCETGCGIGGSTGYGQVGSSGAVSSRTRWCRPDCRVEGTSLPPCCVVSCTSPSCCQLYYAQASCCRPSYCGQSCCRPACCCQPTCTEPVCEPTCSQPIC.

The residue at position 2 (alanine 2) is an N-acetylalanine. 3 repeats span residues 27–36, 37–46, and 47–56; these read STCSQTSCCQ, PTSIQTSCCQ, and PTCLQTSGCE.

Functionally, the keratin products of mammalian epidermal derivatives such as wool and hair consist of microfibrils embedded in a rigid matrix of other proteins. The matrix proteins include the high-sulfur and high-tyrosine keratins, having molecular weights of 6-20 kDa, whereas the microfibrils contain the larger, low-sulfur keratins (40-56 kDa). This chain is Keratin, high-sulfur matrix protein, B2C, found in Ovis aries (Sheep).